The sequence spans 151 residues: MAKIYDFPQGAERRRMHRKIQWNNAVKLSKNGWSKPEVKRWSFLAFISTGWYYFRLSVAVIFHIITICGLAVLAALSNTIFWIGGAICLVTWYTNDHQIWSTNNLTIPIVFGLWVLSLVAAPLIDFFSQKLPFYRLLVPDAKREEVGEDDS.

This is an uncharacterized protein from Escherichia coli.